The chain runs to 412 residues: MRFFFVFLAIVLFQGIHGAYVEIGYSLRNITFDGLDTDDYNPKFNIPTGLAVDPEGYRLFIAIPRRKPKVPYTVAELNMVMNPGFPVERAPSFEKFKKFNGEGKKDLVNVYQPVIDDCRRLWVLDIGKVEYTGGDADQYPKGKPTLIAYDLKKDHTPEIHRFEIPDDLYSSQVEFGGFAVDVVNTKGDCTESFVYLTNFKDNSLIVYDETQKKAWKFTDKTFEADKESTFSYSGEEQMKYKVGLFGIALGDRDEMGHRPACYIAGSSTKVYSVNTKELKTENGQLNPQLHGDRGKYTDAIALAYDPEHKVLYFAESDSRQVSCWNVNMELKPDNTDVIFSSARFTFGTDILVDSKGMLWIMANGHPPVEDQEKIWKMRFVNRKIRIMKVDTERVFKYSRCNPNYKPPKEIEV.

Residues 1–18 form the signal peptide; that stretch reads MRFFFVFLAIVLFQGIHG. The N-linked (GlcNAc...) asparagine glycan is linked to Asn29.

Belongs to the major royal jelly protein family. Salivary gland.

It localises to the secreted. Its function is as follows. Probably modulates blood feeding of sand flies on vertebrate species by binding and sequestering different mediators involved in the host response. Binds biogenic amines. Binds serotonin with high affinity. Binds noradrenaline but not adrenaline. Binds dopamine and octopamine. Binds histamine. Inhibits host smooth muscle contraction induced by histamine in bioassay with guinea pig ileum. Immunogenic; elicits antibody production in the host. Functions as a chemoattractant for host neutrophils; likely acts through a G-protein-coupled receptor and effect is dependent on calcium influx. The protein is Yellow-related salivary protein LJM17 of Lutzomyia longipalpis (Sand fly).